The chain runs to 493 residues: Trans-aconitate decarboxylase 1 (493 aa).

The segment at 1 to 22 (MAPALNANPTTKRDELSAPSAS) is disordered.

This sequence belongs to the class-II fumarase/aspartase family.

It localises to the cytoplasm. It is found in the cytosol. The protein resides in the nucleus. The catalysed reaction is trans-aconitate + H(+) = itaconate + CO2. The protein operates within secondary metabolite biosynthesis. Functionally, trans-aconitate decarboxylase; part of the gene cluster that mediates the biosynthesis of itaconic acid and 2-hydroxyparaconate. Cis-aconitate is secreted by the mitochondrial tricarboxylate transporter MTT1. In the cytosol cis-aconitate is converted into trans-aconitate via isomerization by the aconitate-delta-isomerase ADI1. Decarboxylation of trans-aconitate by the trans-aconitate decarboxylase TAD1 then leads then to the production of itaconic acid. The cytochrome P450 monooxygenase CYP3 further converts itaconate to 2-hydroxyparaconate via oxidation of the double bond, leading to a transient epoxide, which can subsequently be lactonized to produce 2-hydroxyparaconate. Secretion of itaconate and possibly 2-hydroxyparaconate into the medium is mediated by the major facilitator ITP1. The glyoxalase domain-containing protein RDO1 is not involved in the biosynthesis of itaconate and 2-hydroxyparaconate, however, it might play a role in the further conversion of 2-hydroxyparaconate to itatartarate. The chain is Trans-aconitate decarboxylase 1 from Mycosarcoma maydis (Corn smut fungus).